The sequence spans 289 residues: MQKPEWLRVKAPQRERIGAVADLLLDLKLNTVCQEASCPNIGECFAGGTATFLIMGPGCTRACPYCDIDFDKSVRELDPTEPERLGEATQRLGLKHVVITSVNRDDLADGGASQFVACIEQIRRRSPGTTIELLVPDFCGDWDALAAVMAGAPDVLNHNIETVPRLYKKARPQAIYERSLELLQRVRQGWPRCYSKSGLMVGLGETDAEVIEVLADLRRHAVDIVTIGQYLSPGPKHLPVDRFVSPEQFEQFRSQGESELGFLQVVSTPLTRSSYHAGEVQRLMQEHPR.

7 residues coordinate [4Fe-4S] cluster: cysteine 33, cysteine 38, cysteine 44, cysteine 59, cysteine 63, cysteine 66, and serine 274. In terms of domain architecture, Radical SAM core spans 45-263 (FAGGTATFLI…SQGESELGFL (219 aa)).

This sequence belongs to the radical SAM superfamily. Lipoyl synthase family. [4Fe-4S] cluster serves as cofactor.

It localises to the cytoplasm. The catalysed reaction is [[Fe-S] cluster scaffold protein carrying a second [4Fe-4S](2+) cluster] + N(6)-octanoyl-L-lysyl-[protein] + 2 oxidized [2Fe-2S]-[ferredoxin] + 2 S-adenosyl-L-methionine + 4 H(+) = [[Fe-S] cluster scaffold protein] + N(6)-[(R)-dihydrolipoyl]-L-lysyl-[protein] + 4 Fe(3+) + 2 hydrogen sulfide + 2 5'-deoxyadenosine + 2 L-methionine + 2 reduced [2Fe-2S]-[ferredoxin]. Its pathway is protein modification; protein lipoylation via endogenous pathway; protein N(6)-(lipoyl)lysine from octanoyl-[acyl-carrier-protein]: step 2/2. Its function is as follows. Catalyzes the radical-mediated insertion of two sulfur atoms into the C-6 and C-8 positions of the octanoyl moiety bound to the lipoyl domains of lipoate-dependent enzymes, thereby converting the octanoylated domains into lipoylated derivatives. The protein is Lipoyl synthase of Synechococcus sp. (strain RCC307).